An 889-amino-acid polypeptide reads, in one-letter code: Cytoplasmic aconitate hydratase (889 aa).

Substrate is bound by residues glutamine 86 and 205-207; that span reads DSH. [4Fe-4S] cluster-binding residues include cysteine 437, cysteine 503, and cysteine 506. Substrate is bound by residues arginine 536, arginine 541, arginine 699, and 779–780; that span reads SR.

It belongs to the aconitase/IPM isomerase family. Interacts (when associated with the 4Fe-4S) with FBXL5. Interacts with frataxin(81-210). It depends on [4Fe-4S] cluster as a cofactor.

The protein resides in the cytoplasm. The protein localises to the cytosol. It carries out the reaction citrate = D-threo-isocitrate. Its function is as follows. Bifunctional iron sensor that switches between 2 activities depending on iron availability. Iron deprivation, promotes its mRNA binding activity through which it regulates the expression of genes involved in iron uptake, sequestration and utilization. Binds to iron-responsive elements (IRES) in the untranslated region of target mRNAs preventing for instance the translation of ferritin and aminolevulinic acid synthase and stabilizing the transferrin receptor mRNA. In terms of biological role, conversely, when cellular iron levels are high, binds a 4Fe-4S cluster which precludes RNA binding activity and promotes the aconitase activity, the isomerization of citrate to isocitrate via cis-aconitate. The sequence is that of Cytoplasmic aconitate hydratase (ACO1) from Bos taurus (Bovine).